Consider the following 268-residue polypeptide: Undecaprenyl-diphosphatase (268 aa).

7 helical membrane-spanning segments follow: residues 43–63, 85–105, 108–128, 141–161, 184–204, 217–237, and 246–266; these read FWKTFAVLIQLGAILAILAIY, IGVLVAFLPAVILGLIFGTFI, VLFNPWVVCFSLIAGGAVLLW, AMAFPLPMYLGIGIAQCAAMV, AAEFSFFLAIPTMLGAFVYDV, FIIIVGFVVSFITAIVVVKTF, and FTFFAWWRVIVGTLGLIALAL.

This sequence belongs to the UppP family.

Its subcellular location is the cell inner membrane. The catalysed reaction is di-trans,octa-cis-undecaprenyl diphosphate + H2O = di-trans,octa-cis-undecaprenyl phosphate + phosphate + H(+). In terms of biological role, catalyzes the dephosphorylation of undecaprenyl diphosphate (UPP). Confers resistance to bacitracin. In Afipia carboxidovorans (strain ATCC 49405 / DSM 1227 / KCTC 32145 / OM5) (Oligotropha carboxidovorans), this protein is Undecaprenyl-diphosphatase.